A 172-amino-acid chain; its full sequence is Cytochrome b6-f complex iron-sulfur subunit (172 aa).

Residues 17–39 (VFLNALLSSSVGVVVVGTLYPVV) form a helical membrane-spanning segment. Residues 61-161 (GKPISVSELL…ATVDGDNVRF (101 aa)) form the Rieske domain. Positions 107, 109, 125, and 128 each coordinate [2Fe-2S] cluster. A disulfide bridge links C112 with C127.

Belongs to the Rieske iron-sulfur protein family. The 4 large subunits of the cytochrome b6-f complex are cytochrome b6, subunit IV (17 kDa polypeptide, PetD), cytochrome f and the Rieske protein, while the 4 small subunits are PetG, PetL, PetM and PetN. The complex functions as a dimer. [2Fe-2S] cluster serves as cofactor.

It is found in the cellular thylakoid membrane. The catalysed reaction is 2 oxidized [plastocyanin] + a plastoquinol + 2 H(+)(in) = 2 reduced [plastocyanin] + a plastoquinone + 4 H(+)(out). In terms of biological role, component of the cytochrome b6-f complex, which mediates electron transfer between photosystem II (PSII) and photosystem I (PSI), cyclic electron flow around PSI, and state transitions. The protein is Cytochrome b6-f complex iron-sulfur subunit of Synechococcus sp. (strain JA-3-3Ab) (Cyanobacteria bacterium Yellowstone A-Prime).